The chain runs to 559 residues: MTMLKDPSSKYRAFPTINLPDRTWPSKTITSAPIWCSSDLRDGNQSLIEPMDAVKKLRFWKTLVAVGVKEIEASFPAASQTDFDFVRTLIEGGHIPDDTTIQVLTQAREDLIARTFESLRGAKKAIVHLYNATSPSFRRIVFNQDKAGVKEIAVNAAKLFVKYAAQQPETQWQFEYSPETFSATELEFAKEVCDAVVEVWNATPSNKVILNLPATVEVATPNIYADQIEWFCRNINRRDSVLISLHTHNDRGTGVAATELGLMAGADRVEGCLFGNGERTGNVDLVTVALNLYTQGVNPELDFSDIDGVRKVVEECNQIAVHPRHPYVGDLVHTAFSGSHQDAIRKGFAQQKADGLWEVPYLPIDPADIGRSYEAVIRVNSQSGKGGIAYLLEQEYGISLPRRMQIEFSQVVQRETDRLGLEMTAQQIHALLHSEYLQANTPYALVSHRLQEENGHSAVEVEVSSKGQGETNLSWRGKGNGALEALVAGLPVPVEIMDYNEHAIGAGTNAKAAAYIELRVNGERAVHGVGIDENITTASFKALFSALNRSLSEQQAKAA.

The Pyruvate carboxyltransferase domain maps to 33–307 (PIWCSSDLRD…NPELDFSDID (275 aa)). Residues Asp42, His246, His248, and Asn282 each coordinate Mg(2+). The tract at residues 439–559 (ANTPYALVSH…SLSEQQAKAA (121 aa)) is regulatory domain.

Belongs to the alpha-IPM synthase/homocitrate synthase family. LeuA type 2 subfamily. Homodimer. Requires Mg(2+) as cofactor.

The protein localises to the cytoplasm. The catalysed reaction is 3-methyl-2-oxobutanoate + acetyl-CoA + H2O = (2S)-2-isopropylmalate + CoA + H(+). Its pathway is amino-acid biosynthesis; L-leucine biosynthesis; L-leucine from 3-methyl-2-oxobutanoate: step 1/4. Functionally, catalyzes the condensation of the acetyl group of acetyl-CoA with 3-methyl-2-oxobutanoate (2-ketoisovalerate) to form 3-carboxy-3-hydroxy-4-methylpentanoate (2-isopropylmalate). The protein is 2-isopropylmalate synthase of Pseudomonas fluorescens (strain ATCC BAA-477 / NRRL B-23932 / Pf-5).